The sequence spans 476 residues: Aspartyl/glutamyl-tRNA(Asn/Gln) amidotransferase subunit B (476 aa).

It belongs to the GatB/GatE family. GatB subfamily. Heterotrimer of A, B and C subunits.

The enzyme catalyses L-glutamyl-tRNA(Gln) + L-glutamine + ATP + H2O = L-glutaminyl-tRNA(Gln) + L-glutamate + ADP + phosphate + H(+). It catalyses the reaction L-aspartyl-tRNA(Asn) + L-glutamine + ATP + H2O = L-asparaginyl-tRNA(Asn) + L-glutamate + ADP + phosphate + 2 H(+). Its function is as follows. Allows the formation of correctly charged Asn-tRNA(Asn) or Gln-tRNA(Gln) through the transamidation of misacylated Asp-tRNA(Asn) or Glu-tRNA(Gln) in organisms which lack either or both of asparaginyl-tRNA or glutaminyl-tRNA synthetases. The reaction takes place in the presence of glutamine and ATP through an activated phospho-Asp-tRNA(Asn) or phospho-Glu-tRNA(Gln). This Oleidesulfovibrio alaskensis (strain ATCC BAA-1058 / DSM 17464 / G20) (Desulfovibrio alaskensis) protein is Aspartyl/glutamyl-tRNA(Asn/Gln) amidotransferase subunit B.